The following is a 212-amino-acid chain: Fibrillarin-like rRNA/tRNA 2'-O-methyltransferase (212 aa).

The tract at residues M1–W37 is disordered. Residues T74–T75, E90–F91, D115–A116, and D136–T139 each bind S-adenosyl-L-methionine.

This sequence belongs to the methyltransferase superfamily. Fibrillarin family. Interacts with nop5. Component of box C/D small ribonucleoprotein (sRNP) particles that contain rpl7ae, FlpA and nop5, plus a guide RNA.

Involved in pre-rRNA and tRNA processing. Utilizes the methyl donor S-adenosyl-L-methionine to catalyze the site-specific 2'-hydroxyl methylation of ribose moieties in rRNA and tRNA. Site specificity is provided by a guide RNA that base pairs with the substrate. Methylation occurs at a characteristic distance from the sequence involved in base pairing with the guide RNA. In Halorubrum lacusprofundi (strain ATCC 49239 / DSM 5036 / JCM 8891 / ACAM 34), this protein is Fibrillarin-like rRNA/tRNA 2'-O-methyltransferase.